The primary structure comprises 311 residues: MGFLTFLIVPLLILGISGIVYIYREVVRLMSRSALKNKVVVITDAISGLGKECSRVFHSAGARLVLCGKTWEKLEALHDALISVADPSVTFTPKLVLLDISDINNMEAMGKEIQDCYGCVDVLINNASMKMKGPLQSVSLELDKKIMDANYFGPITLVKAILPHMISRRTGQIVLVNTIQGKIGVPFRAAYAASKHAIQGFFDCLRAEVEEFDVSVSTVSPTFIRSYHVQPQPGNWEASIWKFFFRKLSYGAHPVEVAEEVLSTVSRKKQEVFMANPIPRAAVYIRTFLPELFFAVVATGVKEKHFVEEEK.

A signal peptide spans 1-18; the sequence is MGFLTFLIVPLLILGISG. Residue 41 to 65 participates in NAD(+) binding; it reads VITDAISGLGKECSRVFHSAGARLV. Substrate is bound at residue T178. Y191 (proton acceptor) is an active-site residue.

This sequence belongs to the short-chain dehydrogenases/reductases (SDR) family.

The protein resides in the secreted. Putative oxidoreductase. The polypeptide is Dehydrogenase/reductase SDR family member 7C (dhrs7c) (Xenopus tropicalis (Western clawed frog)).